The primary structure comprises 490 residues: Cardiolipin synthase A (490 aa).

The next 2 membrane-spanning stretches (helical) occupy residues 20-40 (LGLLLVGIQVLGFVAAIHAVL) and 49-69 (IAWATSLVFMPYLTLLPYLVF). PLD phosphodiesterase domains follow at residues 229 to 256 (VNFRNHRKVVVVDGECGFVGGHNVGVEY) and 403 to 430 (QPGFLHQKVVLVDRDTAAVGSANLDNRS). Active-site residues include His234, Lys236, Asp241, His408, Lys410, and Asp415.

The protein belongs to the phospholipase D family. Cardiolipin synthase subfamily. ClsA sub-subfamily.

Its subcellular location is the cell inner membrane. It carries out the reaction 2 a 1,2-diacyl-sn-glycero-3-phospho-(1'-sn-glycerol) = a cardiolipin + glycerol. Catalyzes the reversible phosphatidyl group transfer from one phosphatidylglycerol molecule to another to form cardiolipin (CL) (diphosphatidylglycerol) and glycerol. In Pseudomonas aeruginosa (strain LESB58), this protein is Cardiolipin synthase A.